A 206-amino-acid chain; its full sequence is MARYTGPDCRLCRREGMKLFLKGTKCFSEKCPFERRPFAPGQHGRAQRKLTEYGLRLREKQRAKRIYGVLERQFRRYFEIASKGRGVTGERLLQLLETRLDNVVYRLGWALSRDQARQLVSHGKIAVNGKRVNIPSYNLKPGDVVELLDKDLIPVQEAISVFGNKNVPAWLELDRENFRGRVLRLPKREEIDTPVQEQLIVEFYSR.

Residues 98–155 (TRLDNVVYRLGWALSRDQARQLVSHGKIAVNGKRVNIPSYNLKPGDVVELLDKDLIPV) form the S4 RNA-binding domain.

The protein belongs to the universal ribosomal protein uS4 family. Part of the 30S ribosomal subunit. Contacts protein S5. The interaction surface between S4 and S5 is involved in control of translational fidelity.

One of the primary rRNA binding proteins, it binds directly to 16S rRNA where it nucleates assembly of the body of the 30S subunit. Functionally, with S5 and S12 plays an important role in translational accuracy. In Dictyoglomus thermophilum (strain ATCC 35947 / DSM 3960 / H-6-12), this protein is Small ribosomal subunit protein uS4.